The primary structure comprises 90 residues: Small ribosomal subunit protein bS16 (90 aa).

The protein belongs to the bacterial ribosomal protein bS16 family.

This chain is Small ribosomal subunit protein bS16, found in Bacillus licheniformis (strain ATCC 14580 / DSM 13 / JCM 2505 / CCUG 7422 / NBRC 12200 / NCIMB 9375 / NCTC 10341 / NRRL NRS-1264 / Gibson 46).